A 338-amino-acid chain; its full sequence is Ketol-acid reductoisomerase (NADP(+)) (338 aa).

One can recognise a KARI N-terminal Rossmann domain in the interval 1–181; it reads MTVYYDKDCN…GGGRTAIIET (181 aa). NADP(+) contacts are provided by residues 24-27, R47, S52, and 82-85; these read FGSQ and DENQ. The active site involves H107. G133 contacts NADP(+). The KARI C-terminal knotted domain maps to 182–327; it reads TFKDETETDL…VKLRTMMPWI (146 aa). Mg(2+) contacts are provided by D190, E194, E226, and E230. S251 lines the substrate pocket.

It belongs to the ketol-acid reductoisomerase family. Mg(2+) serves as cofactor.

It carries out the reaction (2R)-2,3-dihydroxy-3-methylbutanoate + NADP(+) = (2S)-2-acetolactate + NADPH + H(+). The catalysed reaction is (2R,3R)-2,3-dihydroxy-3-methylpentanoate + NADP(+) = (S)-2-ethyl-2-hydroxy-3-oxobutanoate + NADPH + H(+). It participates in amino-acid biosynthesis; L-isoleucine biosynthesis; L-isoleucine from 2-oxobutanoate: step 2/4. It functions in the pathway amino-acid biosynthesis; L-valine biosynthesis; L-valine from pyruvate: step 2/4. In terms of biological role, involved in the biosynthesis of branched-chain amino acids (BCAA). Catalyzes an alkyl-migration followed by a ketol-acid reduction of (S)-2-acetolactate (S2AL) to yield (R)-2,3-dihydroxy-isovalerate. In the isomerase reaction, S2AL is rearranged via a Mg-dependent methyl migration to produce 3-hydroxy-3-methyl-2-ketobutyrate (HMKB). In the reductase reaction, this 2-ketoacid undergoes a metal-dependent reduction by NADPH to yield (R)-2,3-dihydroxy-isovalerate. The polypeptide is Ketol-acid reductoisomerase (NADP(+)) (Sulfurimonas denitrificans (strain ATCC 33889 / DSM 1251) (Thiomicrospira denitrificans (strain ATCC 33889 / DSM 1251))).